We begin with the raw amino-acid sequence, 149 residues long: Nucleoside diphosphate kinase (149 aa).

Positions 9, 57, 85, 91, 102, and 112 each coordinate ATP. His115 functions as the Pros-phosphohistidine intermediate in the catalytic mechanism.

The protein belongs to the NDK family. Homotetramer. Mg(2+) is required as a cofactor.

Its subcellular location is the cytoplasm. It carries out the reaction a 2'-deoxyribonucleoside 5'-diphosphate + ATP = a 2'-deoxyribonucleoside 5'-triphosphate + ADP. The enzyme catalyses a ribonucleoside 5'-diphosphate + ATP = a ribonucleoside 5'-triphosphate + ADP. In terms of biological role, major role in the synthesis of nucleoside triphosphates other than ATP. The ATP gamma phosphate is transferred to the NDP beta phosphate via a ping-pong mechanism, using a phosphorylated active-site intermediate. The chain is Nucleoside diphosphate kinase from Carboxydothermus hydrogenoformans (strain ATCC BAA-161 / DSM 6008 / Z-2901).